The sequence spans 77 residues: Apidermin 2 (77 aa).

The first 16 residues, 1 to 16, serve as a signal peptide directing secretion; it reads MKSLLILFAIVAVVAA.

In terms of tissue distribution, expressed in the epidermis, hypopharyngeal glands, fat body, trachea, esophagus and stomach.

Its subcellular location is the secreted. In terms of biological role, antimicrobial peptide that binds cell wall carbohydrates of microbial symbionts and induces structural damage. Binds the cell wall carbohydrates mannan, N-acetyl-D-glucosamine and lipopolysaccharide. Can target fungi, Gram-negative and Gram-positive bacteria. The polypeptide is Apidermin 2 (Apis mellifera (Honeybee)).